A 171-amino-acid chain; its full sequence is Phosphinothricin N-acetyltransferase (171 aa).

One can recognise an N-acetyltransferase domain in the interval 7-171 (VQVRPGVEED…WDVAWYERPL (165 aa)). Acetyl-CoA-binding positions include 94 to 96 (VYV), 102 to 107 (GRGIGS), and Asn-133.

The protein belongs to the acetyltransferase family. PAT/BAR subfamily.

It catalyses the reaction phosphinothricin + acetyl-CoA = N-acetylphosphinothricin + CoA + H(+). In terms of biological role, inactivates phosphinothricin (PPT) by transfer of an acetyl group from acetyl CoA. The physiological substrate could be a structurally related compound. This Streptomyces coelicolor (strain ATCC BAA-471 / A3(2) / M145) protein is Phosphinothricin N-acetyltransferase.